The following is a 255-amino-acid chain: Aprataxin and PNK-like factor (255 aa).

The segment covering 1 to 11 (MSATDASTADS) has biased composition (low complexity). Disordered stretches follow at residues 1-117 (MSAT…VSSS), 131-168 (RRNP…FGNA), and 195-255 (RLRQ…DDYD). Basic and acidic residues-rich tracts occupy residues 12–22 (GAKRKSSEDIT), 40–64 (KSEE…KAEP), and 137–150 (RSAE…DYRR). 2 consecutive PBZ-type zinc fingers follow at residues 121-142 (TSCR…AEAH) and 161-182 (PACP…DYSH). A compositionally biased stretch (acidic residues) spans 207–218 (DDSGTDEEDEPF). Over residues 221–230 (DNDRDADYRP) the composition is skewed to basic and acidic residues. Over residues 234–244 (INEDEDDELEF) the composition is skewed to acidic residues.

The protein belongs to the APLF family.

Displays apurinic-apyrimidinic (AP) endonuclease and 3'-5' exonuclease activities in vitro. This Drosophila melanogaster (Fruit fly) protein is Aprataxin and PNK-like factor.